The following is a 443-amino-acid chain: ATP-dependent protease ATPase subunit HslU (443 aa).

Residues isoleucine 18, 60-65 (GVGKTE), aspartate 256, glutamate 321, and arginine 393 contribute to the ATP site.

The protein belongs to the ClpX chaperone family. HslU subfamily. As to quaternary structure, a double ring-shaped homohexamer of HslV is capped on each side by a ring-shaped HslU homohexamer. The assembly of the HslU/HslV complex is dependent on binding of ATP.

Its subcellular location is the cytoplasm. Functionally, ATPase subunit of a proteasome-like degradation complex; this subunit has chaperone activity. The binding of ATP and its subsequent hydrolysis by HslU are essential for unfolding of protein substrates subsequently hydrolyzed by HslV. HslU recognizes the N-terminal part of its protein substrates and unfolds these before they are guided to HslV for hydrolysis. The protein is ATP-dependent protease ATPase subunit HslU of Vibrio cholerae serotype O1 (strain ATCC 39315 / El Tor Inaba N16961).